The sequence spans 87 residues: Small ribosomal subunit protein uS15c (87 aa).

This sequence belongs to the universal ribosomal protein uS15 family. As to quaternary structure, part of the 30S ribosomal subunit.

It localises to the plastid. The protein resides in the chloroplast. This is Small ribosomal subunit protein uS15c (rps15) from Atropa belladonna (Belladonna).